Consider the following 503-residue polypeptide: tRNA-guanine(15) transglycosylase (503 aa).

Catalysis depends on aspartate 86, which acts as the Nucleophile. Aspartate 121 lines the substrate pocket. The Zn(2+) site is built by cysteine 278, cysteine 280, and cysteine 283.

The protein belongs to the archaeosine tRNA-ribosyltransferase family. Zn(2+) serves as cofactor.

The enzyme catalyses guanosine(15) in tRNA + 7-cyano-7-deazaguanine = 7-cyano-7-carbaguanosine(15) in tRNA + guanine. It participates in tRNA modification; archaeosine-tRNA biosynthesis. Its function is as follows. Exchanges the guanine residue with 7-cyano-7-deazaguanine (preQ0) at position 15 in the dihydrouridine loop (D-loop) of archaeal tRNAs. The chain is tRNA-guanine(15) transglycosylase from Saccharolobus solfataricus (strain ATCC 35092 / DSM 1617 / JCM 11322 / P2) (Sulfolobus solfataricus).